The sequence spans 529 residues: Putative inorganic phosphate cotransporter (529 aa).

The next 8 helical transmembrane spans lie at 37-57, 110-130, 148-168, 202-222, 232-252, 338-358, 429-449, and 466-486; these read FATR…AYVM, YILS…GILA, VFAF…LCAV, AVYA…GLLA, SIFY…LIFV, LPYL…DWMI, FLMS…PIAA, and IVFF…NIFG. The segment at 495 to 529 is disordered; sequence NPEDDEQKPALQTTVTTSPARLSNGSTAPAAISSS. Residues 504–529 are compositionally biased toward polar residues; sequence ALQTTVTTSPARLSNGSTAPAAISSS.

The protein belongs to the major facilitator superfamily. Sodium/anion cotransporter family.

The protein localises to the membrane. In terms of biological role, may be an inorganic phosphate cotransporter. The protein is Putative inorganic phosphate cotransporter (Picot) of Drosophila melanogaster (Fruit fly).